A 148-amino-acid chain; its full sequence is Large ribosomal subunit protein bL9 (148 aa).

Part of the 50S ribosomal subunit.

Binds to the 23S rRNA. Extends more that 50 Angstroms beyond the surface of the 70S ribosome. This is Large ribosomal subunit protein bL9 (rplI) from Thermus thermophilus (strain ATCC 27634 / DSM 579 / HB8).